The following is a 286-amino-acid chain: Nucleotide-binding protein PSPA7_5038 (286 aa).

Gly-8–Ser-15 lines the ATP pocket. Asp-60–Asn-63 contacts GTP.

Belongs to the RapZ-like family.

Functionally, displays ATPase and GTPase activities. The chain is Nucleotide-binding protein PSPA7_5038 from Pseudomonas paraeruginosa (strain DSM 24068 / PA7) (Pseudomonas aeruginosa (strain PA7)).